The following is a 346-amino-acid chain: N-acetyl-gamma-glutamyl-phosphate reductase (346 aa).

Residue Cys-151 is part of the active site.

Belongs to the NAGSA dehydrogenase family. Type 1 subfamily.

The protein localises to the cytoplasm. It carries out the reaction N-acetyl-L-glutamate 5-semialdehyde + phosphate + NADP(+) = N-acetyl-L-glutamyl 5-phosphate + NADPH + H(+). The protein operates within amino-acid biosynthesis; L-arginine biosynthesis; N(2)-acetyl-L-ornithine from L-glutamate: step 3/4. Its function is as follows. Catalyzes the NADPH-dependent reduction of N-acetyl-5-glutamyl phosphate to yield N-acetyl-L-glutamate 5-semialdehyde. The polypeptide is N-acetyl-gamma-glutamyl-phosphate reductase (Ehrlichia canis (strain Jake)).